A 200-amino-acid chain; its full sequence is dITP/XTP pyrophosphatase (200 aa).

8-13 (TRNAGK) contacts substrate. The Proton acceptor role is filled by Asp-72. Residue Asp-72 coordinates Mg(2+). Substrate-binding positions include Ser-73, 155–158 (FGYD), Lys-178, and 183–184 (HR).

It belongs to the HAM1 NTPase family. As to quaternary structure, homodimer. Mg(2+) is required as a cofactor.

The enzyme catalyses XTP + H2O = XMP + diphosphate + H(+). It catalyses the reaction dITP + H2O = dIMP + diphosphate + H(+). It carries out the reaction ITP + H2O = IMP + diphosphate + H(+). Pyrophosphatase that catalyzes the hydrolysis of nucleoside triphosphates to their monophosphate derivatives, with a high preference for the non-canonical purine nucleotides XTP (xanthosine triphosphate), dITP (deoxyinosine triphosphate) and ITP. Seems to function as a house-cleaning enzyme that removes non-canonical purine nucleotides from the nucleotide pool, thus preventing their incorporation into DNA/RNA and avoiding chromosomal lesions. This chain is dITP/XTP pyrophosphatase, found in Streptomyces coelicolor (strain ATCC BAA-471 / A3(2) / M145).